The chain runs to 230 residues: Large ribosomal subunit protein uL3 (230 aa).

Disordered stretches follow at residues 125–149 and 210–230; these read QAIG…SLGD and PNPK…VKNE.

It belongs to the universal ribosomal protein uL3 family. As to quaternary structure, part of the 50S ribosomal subunit. Forms a cluster with proteins L14 and L19.

Functionally, one of the primary rRNA binding proteins, it binds directly near the 3'-end of the 23S rRNA, where it nucleates assembly of the 50S subunit. This Mesomycoplasma hyopneumoniae (strain 232) (Mycoplasma hyopneumoniae) protein is Large ribosomal subunit protein uL3.